The sequence spans 86 residues: Putative membrane protein insertion efficiency factor (86 aa).

It belongs to the UPF0161 family.

The protein resides in the cell inner membrane. Could be involved in insertion of integral membrane proteins into the membrane. The polypeptide is Putative membrane protein insertion efficiency factor (Haemophilus influenzae (strain 86-028NP)).